The primary structure comprises 185 residues: Ribosome-recycling factor (185 aa).

Belongs to the RRF family.

The protein localises to the cytoplasm. Responsible for the release of ribosomes from messenger RNA at the termination of protein biosynthesis. May increase the efficiency of translation by recycling ribosomes from one round of translation to another. The protein is Ribosome-recycling factor of Pseudomonas fluorescens (strain ATCC BAA-477 / NRRL B-23932 / Pf-5).